The chain runs to 509 residues: tRNA (guanine(37)-N(1))-methyltransferase (509 aa).

A mitochondrion-targeting transit peptide spans 1-57 (MVLWILWRPFGFSRRLLKLERHSITESKSLIPLAWTSLTQTLSESPGIFLLGQRKRF). S-adenosyl-L-methionine contacts are provided by residues H289, 327-328 (DL), 355-356 (DG), and N387. The tract at residues 478 to 509 (TKNPENHEDPPLKRQRTAEAFSDEKTQIASNT) is disordered.

This sequence belongs to the class I-like SAM-binding methyltransferase superfamily. TRM5/TYW2 family. In terms of assembly, monomer.

It localises to the mitochondrion matrix. The protein resides in the nucleus. The protein localises to the cytoplasm. The catalysed reaction is guanosine(37) in tRNA + S-adenosyl-L-methionine = N(1)-methylguanosine(37) in tRNA + S-adenosyl-L-homocysteine + H(+). Involved in mitochondrial tRNA methylation. Specifically methylates the N1 position of guanosine-37 in various tRNAs. Methylation is not dependent on the nature of the nucleoside 5' of the target nucleoside. This is the first step in the biosynthesis of wybutosine (yW), a modified base adjacent to the anticodon of tRNAs and required for accurate decoding. The protein is tRNA (guanine(37)-N(1))-methyltransferase of Macaca fascicularis (Crab-eating macaque).